A 99-amino-acid polypeptide reads, in one-letter code: Elongin-C (99 aa).

An N-acetylserine modification is found at Ser-2. Ser-2 bears the Phosphoserine mark.

The protein belongs to the SKP1 family. In terms of assembly, heterodimer with ELA1. Component of a CRL3 E3 ubiquitin ligase complex consisting of the cullin CUL3, the linker protein ELC1, the substrate receptor ELA1, and the RING protein HRT1. Interacts with CIN5. Interacts with PCL6. Interacts with SNF4. Interacts with the large RNA polymerase II subunit RPO21 in a manner dependent on DEF1. Interacts with DEF1. Interacts with RAD7. Interacts with RAD16.

It localises to the cytoplasm. It is found in the nucleus. Functionally, as part of the CRL3 E3 ubiquitin ligase complex; polyubiquitylates monoubiquitylated RNA polymerase II subunit RPO21 to trigger its proteolysis; plays a role in global genomic repair. Prevents degradation of interacting proteins like PCL6 by the proteasome. This Saccharomyces cerevisiae (strain ATCC 204508 / S288c) (Baker's yeast) protein is Elongin-C (ELC1).